We begin with the raw amino-acid sequence, 194 residues long: HTH-type transcriptional regulator BetI (194 aa).

The 61-residue stretch at proline 8–leucine 68 folds into the HTH tetR-type domain. The segment at residues threonine 31–phenylalanine 50 is a DNA-binding region (H-T-H motif).

It participates in amine and polyamine biosynthesis; betaine biosynthesis via choline pathway [regulation]. In terms of biological role, repressor involved in the biosynthesis of the osmoprotectant glycine betaine. It represses transcription of the choline transporter BetT and the genes of BetAB involved in the synthesis of glycine betaine. In Brucella anthropi (strain ATCC 49188 / DSM 6882 / CCUG 24695 / JCM 21032 / LMG 3331 / NBRC 15819 / NCTC 12168 / Alc 37) (Ochrobactrum anthropi), this protein is HTH-type transcriptional regulator BetI.